We begin with the raw amino-acid sequence, 726 residues long: NHL repeat-containing protein 2 (726 aa).

NHL repeat units lie at residues 212-254, 265-307, 335-369, 409-439, 461-505, and 518-562; these read KLYK…VWKN, NPGR…IDLE, ISSP…IWAL, FAQP…VRTV, AFGD…VDPK, and ASNM…LDLE.

In terms of assembly, monomer.

It localises to the cytoplasm. The protein localises to the cytosol. In terms of biological role, required for normal embryonic development. This chain is NHL repeat-containing protein 2 (NHLRC2), found in Bos taurus (Bovine).